A 197-amino-acid polypeptide reads, in one-letter code: dITP/XTP pyrophosphatase (197 aa).

8-13 (TGNPGK) lines the substrate pocket. Mg(2+)-binding residues include E40 and D69. D69 (proton acceptor) is an active-site residue. Substrate is bound by residues S70, 154-157 (FGYD), K177, and 182-183 (HR).

It belongs to the HAM1 NTPase family. In terms of assembly, homodimer. It depends on Mg(2+) as a cofactor.

The enzyme catalyses XTP + H2O = XMP + diphosphate + H(+). It catalyses the reaction dITP + H2O = dIMP + diphosphate + H(+). The catalysed reaction is ITP + H2O = IMP + diphosphate + H(+). In terms of biological role, pyrophosphatase that catalyzes the hydrolysis of nucleoside triphosphates to their monophosphate derivatives, with a high preference for the non-canonical purine nucleotides XTP (xanthosine triphosphate), dITP (deoxyinosine triphosphate) and ITP. Seems to function as a house-cleaning enzyme that removes non-canonical purine nucleotides from the nucleotide pool, thus preventing their incorporation into DNA/RNA and avoiding chromosomal lesions. The chain is dITP/XTP pyrophosphatase from Yersinia pseudotuberculosis serotype I (strain IP32953).